We begin with the raw amino-acid sequence, 1488 residues long: Calmodulin binding protein PICBP (1488 aa).

Disordered regions lie at residues 1–31 (MSNP…RKMW), 63–112 (TAES…SRIS), 280–329 (GPLG…GRSS), and 378–414 (HDHD…EEDG). Positions 18–31 (SSRRVHKRRERKMW) are enriched in basic residues. Basic and acidic residues predominate over residues 76 to 86 (DDSRTYSKSSD). Residues 98-107 (SVKRRAKSKS) show a composition bias toward basic residues. Over residues 297-312 (DNVDGDSDEEVFEEEV) the composition is skewed to acidic residues. 2 calmodulin-binding regions span residues 493 to 592 (TFHM…SLIP) and 831 to 938 (NSLK…DIVL). Disordered regions lie at residues 816 to 844 (IPDS…GETK) and 941 to 971 (HDTP…EGCE). Basic and acidic residues-rich tracts occupy residues 833–844 (LKEEKEHQGETK) and 954–971 (RNND…EGCE). Residues 1135–1229 (EKRVKGWNNV…SLLAQAFDTI (95 aa)) are calmodulin-binding. 2 disordered regions span residues 1232-1252 (QDMG…ISRQ) and 1316-1340 (EKNQ…DTSV). Positions 1235 to 1252 (GSGSTPGSAASSRNISRQ) are enriched in low complexity. Residues 1316-1328 (EKNQTLPEETRKE) show a composition bias toward basic and acidic residues. The interval 1379-1483 (RQKSETLQVS…QLLVQAFESL (105 aa)) is calmodulin-binding.

Its function is as follows. Binds calmodulin in a calcium-dependent manner in vitro. May play a role in general plant defense including R gene-mediated responses. This chain is Calmodulin binding protein PICBP, found in Arabidopsis thaliana (Mouse-ear cress).